Consider the following 248-residue polypeptide: Pulmonary surfactant-associated protein A1 (248 aa).

Positions 1-20 (MWLCPLALNLILMAASGAVC) are cleaved as a signal peptide. Residues 28 to 100 (GSPGIPGTPG…PGERGPPGLP (73 aa)) enclose the Collagen-like domain. 4-hydroxyproline is present on residues Pro-30, Pro-33, Pro-36, Pro-42, Pro-54, Pro-57, Pro-63, Pro-67, and Pro-70. A disordered region spans residues 31 to 101 (GIPGTPGSHG…GERGPPGLPA (71 aa)). A compositionally biased stretch (basic and acidic residues) spans 42 to 51 (PGRDGRDGLK). A compositionally biased stretch (pro residues) spans 54 to 70 (PGPPGPMGPPGEMPCPP). Residues 132-248 (MTVGEKVFSS…LYSRLTICEF (117 aa)) form the C-type lectin domain. Intrachain disulfides connect Cys-155-Cys-246 and Cys-224-Cys-238. A glycan (N-linked (GlcNAc...) asparagine) is linked at Asn-207.

The protein belongs to the SFTPA family. As to quaternary structure, oligomeric complex of 6 set of homotrimers. Interacts with CD93. (Microbial infection) Binds M.bovis cell surface protein Apa via its glycosylated sites; probably also recognizes other bacterial moieties. In terms of assembly, (Microbial infection) Binds to the S.aureus extracellular adherence protein, Eap, thereby enhancing phagocytosis and killing of S.aureus by alveolar macrophages. As to quaternary structure, (Microbial infection) Interacts with M.pneumoniae CARDS toxin; CARDS probably uses this protein as a receptor. In terms of processing, N-acetylated.

The protein localises to the secreted. The protein resides in the extracellular space. It localises to the extracellular matrix. It is found in the surface film. In terms of biological role, in presence of calcium ions, it binds to surfactant phospholipids and contributes to lower the surface tension at the air-liquid interface in the alveoli of the mammalian lung and is essential for normal respiration. Enhances the expression of MYO18A/SP-R210 on alveolar macrophages. Its function is as follows. (Microbial infection) Recognition of M.tuberculosis by dendritic cells may occur partially via this molecule. Can recognize, bind, and opsonize pathogens to enhance their elimination by alveolar macrophages. Functionally, (Microbial infection) Binds M.pneumoniae CARDS toxin, serves as one receptor for this pathogen. When SFTPA1 is down-regulated by siRNA, less toxin binds to human cells and less vacuolization (a symptom of M.pneumoniae infection) is seen. This is Pulmonary surfactant-associated protein A1 (SFTPA1) from Homo sapiens (Human).